A 403-amino-acid chain; its full sequence is Argininosuccinate synthase (403 aa).

Residue 10-18 coordinates ATP; sequence AYSGGVDTS. Y89 provides a ligand contact to L-citrulline. Position 119 (G119) interacts with ATP. L-aspartate is bound by residues T121, N125, and D126. N125 provides a ligand contact to L-citrulline. L-citrulline-binding residues include R129, S177, S186, E262, and Y274.

The protein belongs to the argininosuccinate synthase family. Type 1 subfamily. Homotetramer.

The protein resides in the cytoplasm. The enzyme catalyses L-citrulline + L-aspartate + ATP = 2-(N(omega)-L-arginino)succinate + AMP + diphosphate + H(+). The protein operates within amino-acid biosynthesis; L-arginine biosynthesis; L-arginine from L-ornithine and carbamoyl phosphate: step 2/3. This is Argininosuccinate synthase from Synechococcus sp. (strain JA-3-3Ab) (Cyanobacteria bacterium Yellowstone A-Prime).